We begin with the raw amino-acid sequence, 466 residues long: Ribulose bisphosphate carboxylase large chain (466 aa).

Lys-5 carries the N6,N6,N6-trimethyllysine modification. Positions 114 and 164 each coordinate substrate. The active-site Proton acceptor is Lys-166. Lys-168 contacts substrate. The Mg(2+) site is built by Lys-192, Asp-194, and Glu-195. Lys-192 bears the N6-carboxylysine mark. His-285 acts as the Proton acceptor in catalysis. Substrate-binding residues include Arg-286, His-318, and Ser-370.

It belongs to the RuBisCO large chain family. Type I subfamily. Heterohexadecamer of 8 large chains and 8 small chains; disulfide-linked. The disulfide link is formed within the large subunit homodimers. It depends on Mg(2+) as a cofactor. The disulfide bond which can form in the large chain dimeric partners within the hexadecamer appears to be associated with oxidative stress and protein turnover.

Its subcellular location is the plastid. It localises to the chloroplast. The catalysed reaction is 2 (2R)-3-phosphoglycerate + 2 H(+) = D-ribulose 1,5-bisphosphate + CO2 + H2O. It catalyses the reaction D-ribulose 1,5-bisphosphate + O2 = 2-phosphoglycolate + (2R)-3-phosphoglycerate + 2 H(+). Its function is as follows. RuBisCO catalyzes two reactions: the carboxylation of D-ribulose 1,5-bisphosphate, the primary event in carbon dioxide fixation, as well as the oxidative fragmentation of the pentose substrate in the photorespiration process. Both reactions occur simultaneously and in competition at the same active site. This Drosera binata (Fork-leaved sundew) protein is Ribulose bisphosphate carboxylase large chain.